Reading from the N-terminus, the 261-residue chain is Uridine-cytidine kinase 2-B (261 aa).

ATP is bound at residue Gly-29–Ser-37. Residues Asp-86, Tyr-114, His-119, Arg-168, Arg-178, and Gln-186 each coordinate substrate. An ATP-binding site is contributed by Asp-215. The interval Arg-238–His-261 is disordered.

This sequence belongs to the uridine kinase family. In terms of assembly, homotetramer.

The catalysed reaction is uridine + ATP = UMP + ADP + H(+). The enzyme catalyses cytidine + ATP = CMP + ADP + H(+). Its pathway is pyrimidine metabolism; CTP biosynthesis via salvage pathway; CTP from cytidine: step 1/3. It participates in pyrimidine metabolism; UMP biosynthesis via salvage pathway; UMP from uridine: step 1/1. Its function is as follows. Phosphorylates uridine and cytidine to uridine monophosphate and cytidine monophosphate. Does not phosphorylate deoxyribonucleosides or purine ribonucleosides. Can use ATP or GTP as a phosphate donor. The sequence is that of Uridine-cytidine kinase 2-B (uck2b) from Danio rerio (Zebrafish).